Reading from the N-terminus, the 364-residue chain is UDP-N-acetylglucosamine--N-acetylmuramyl-(pentapeptide) pyrophosphoryl-undecaprenol N-acetylglucosamine transferase (364 aa).

UDP-N-acetyl-alpha-D-glucosamine is bound by residues 10 to 12 (TGG), Asn-128, Arg-170, Ser-199, Ile-250, and Gln-295.

The protein belongs to the glycosyltransferase 28 family. MurG subfamily.

The protein localises to the cell inner membrane. It catalyses the reaction di-trans,octa-cis-undecaprenyl diphospho-N-acetyl-alpha-D-muramoyl-L-alanyl-D-glutamyl-meso-2,6-diaminopimeloyl-D-alanyl-D-alanine + UDP-N-acetyl-alpha-D-glucosamine = di-trans,octa-cis-undecaprenyl diphospho-[N-acetyl-alpha-D-glucosaminyl-(1-&gt;4)]-N-acetyl-alpha-D-muramoyl-L-alanyl-D-glutamyl-meso-2,6-diaminopimeloyl-D-alanyl-D-alanine + UDP + H(+). It participates in cell wall biogenesis; peptidoglycan biosynthesis. Functionally, cell wall formation. Catalyzes the transfer of a GlcNAc subunit on undecaprenyl-pyrophosphoryl-MurNAc-pentapeptide (lipid intermediate I) to form undecaprenyl-pyrophosphoryl-MurNAc-(pentapeptide)GlcNAc (lipid intermediate II). This is UDP-N-acetylglucosamine--N-acetylmuramyl-(pentapeptide) pyrophosphoryl-undecaprenol N-acetylglucosamine transferase from Chlorobium phaeobacteroides (strain DSM 266 / SMG 266 / 2430).